Here is a 200-residue protein sequence, read N- to C-terminus: ATP-dependent Clp protease proteolytic subunit 3 (200 aa).

Residue Ser101 is the Nucleophile of the active site. His126 is an active-site residue.

The protein belongs to the peptidase S14 family. As to quaternary structure, fourteen ClpP subunits assemble into 2 heptameric rings which stack back to back to give a disk-like structure with a central cavity, resembling the structure of eukaryotic proteasomes.

The protein localises to the cytoplasm. The catalysed reaction is Hydrolysis of proteins to small peptides in the presence of ATP and magnesium. alpha-casein is the usual test substrate. In the absence of ATP, only oligopeptides shorter than five residues are hydrolyzed (such as succinyl-Leu-Tyr-|-NHMec, and Leu-Tyr-Leu-|-Tyr-Trp, in which cleavage of the -Tyr-|-Leu- and -Tyr-|-Trp bonds also occurs).. Functionally, cleaves peptides in various proteins in a process that requires ATP hydrolysis. Has a chymotrypsin-like activity. Plays a major role in the degradation of misfolded proteins. This chain is ATP-dependent Clp protease proteolytic subunit 3, found in Synechococcus sp. (strain CC9902).